A 99-amino-acid chain; its full sequence is Small ribosomal subunit protein bS20 (99 aa).

This sequence belongs to the bacterial ribosomal protein bS20 family.

Its function is as follows. Binds directly to 16S ribosomal RNA. The chain is Small ribosomal subunit protein bS20 from Chlamydia pneumoniae (Chlamydophila pneumoniae).